A 288-amino-acid chain; its full sequence is Keratin-associated protein 5-4 (288 aa).

A run of 9 repeats spans residues 49–52, 55–58, 61–64, 201–204, 220–223, 239–242, 249–252, 268–271, and 278–281. Residues 49-281 form a 9 X 4 AA repeats of C-C-X-P region; the sequence is CCVPICCCKP…CCSQSSCCVP (233 aa).

Belongs to the KRTAP type 5 family. As to quaternary structure, interacts with hair keratins. As to expression, restricted to hair root, not detected in any other tissues.

Its function is as follows. In the hair cortex, hair keratin intermediate filaments are embedded in an interfilamentous matrix, consisting of hair keratin-associated protein (KRTAP), which are essential for the formation of a rigid and resistant hair shaft through their extensive disulfide bond cross-linking with abundant cysteine residues of hair keratins. The matrix proteins include the high-sulfur and high-glycine-tyrosine keratins. This chain is Keratin-associated protein 5-4 (KRTAP5-4), found in Homo sapiens (Human).